The primary structure comprises 146 residues: Large ribosomal subunit protein uL16 (146 aa).

It belongs to the universal ribosomal protein uL16 family. Part of the 50S ribosomal subunit.

Binds 23S rRNA and is also seen to make contacts with the A and possibly P site tRNAs. The polypeptide is Large ribosomal subunit protein uL16 (Thermomicrobium roseum (strain ATCC 27502 / DSM 5159 / P-2)).